Reading from the N-terminus, the 152-residue chain is Superoxide dismutase [Cu-Zn] 2 (152 aa).

Residues asparagine 9 and asparagine 33 are each glycosylated (N-linked (GlcNAc...) asparagine). Cu cation contacts are provided by histidine 45, histidine 47, and histidine 62. A disulfide bond links cysteine 56 and cysteine 145. Zn(2+) contacts are provided by histidine 62, histidine 70, histidine 79, and aspartate 82. The N-linked (GlcNAc...) asparagine glycan is linked to asparagine 85. Residue histidine 119 participates in Cu cation binding.

The protein belongs to the Cu-Zn superoxide dismutase family. Cu cation serves as cofactor. Requires Zn(2+) as cofactor. As to expression, expressed in fruits, leaves and pollen grains.

It localises to the cytoplasm. It is found in the endoplasmic reticulum. The enzyme catalyses 2 superoxide + 2 H(+) = H2O2 + O2. Inhibited by KCN and H(2)O(2). Functionally, destroys radicals which are normally produced within the cells and which are toxic to biological systems. Probably involved in the protection against oxidative stress during pollen development. In Olea europaea (Common olive), this protein is Superoxide dismutase [Cu-Zn] 2 (OLE5).